The primary structure comprises 40 residues: MANTTGRIPLWLIGTVAGILVLGLLGIFFYGSYSGLGSSL.

A helical membrane pass occupies residues 8–28; the sequence is IPLWLIGTVAGILVLGLLGIF.

It belongs to the PsbJ family. PSII is composed of 1 copy each of membrane proteins PsbA, PsbB, PsbC, PsbD, PsbE, PsbF, PsbH, PsbI, PsbJ, PsbK, PsbL, PsbM, PsbT, PsbX, PsbY, PsbZ, Psb30/Ycf12, at least 3 peripheral proteins of the oxygen-evolving complex and a large number of cofactors. It forms dimeric complexes.

Its subcellular location is the plastid. The protein resides in the chloroplast thylakoid membrane. Functionally, one of the components of the core complex of photosystem II (PSII). PSII is a light-driven water:plastoquinone oxidoreductase that uses light energy to abstract electrons from H(2)O, generating O(2) and a proton gradient subsequently used for ATP formation. It consists of a core antenna complex that captures photons, and an electron transfer chain that converts photonic excitation into a charge separation. This Physcomitrium patens (Spreading-leaved earth moss) protein is Photosystem II reaction center protein J.